We begin with the raw amino-acid sequence, 172 residues long: Ubiquitin-conjugating enzyme E2 2 (172 aa).

The region spanning 4 to 150 is the UBC core domain; it reads PARRRLMRDF…VKETVEKSWE (147 aa). The active-site Glycyl thioester intermediate is Cys-88. Ser-120 is modified (phosphoserine; by SGV1). A disordered region spans residues 145-172; it reads VEKSWEDDMDDMDDDDDDDDDDDDDEAD. Over residues 151 to 172 the composition is skewed to acidic residues; it reads DDMDDMDDDDDDDDDDDDDEAD.

The protein belongs to the ubiquitin-conjugating enzyme family. Forms a heterodimer complexes with the E3 enzymes BRE1, RAD18 and UBR1. Also interacts with UBR2, RTF1, PAF1 and the RNA polymerase II hyperphosphorylated form. The interaction with RNA polymerase II is BRE1- and PAF1-dependent. The N-terminus is blocked.

Its subcellular location is the cytoplasm. It is found in the nucleus. The enzyme catalyses S-ubiquitinyl-[E1 ubiquitin-activating enzyme]-L-cysteine + [E2 ubiquitin-conjugating enzyme]-L-cysteine = [E1 ubiquitin-activating enzyme]-L-cysteine + S-ubiquitinyl-[E2 ubiquitin-conjugating enzyme]-L-cysteine.. It functions in the pathway protein modification; protein ubiquitination. E2 ubiquitin-conjugating enzyme that accepts ubiquitin from the ubiquitin-activating enzyme E1 and transfers it to a E3 ubiquitin-protein ligase. In association with the E3 enzyme BRE1 and LGE1, it plays a role in transcription regulation by catalyzing the monoubiquitination of histone H2B to form H2BK123ub1. H2BK123ub1 gives a specific tag for epigenetic transcriptional activation, elongation by RNA polymerase II, telomeric silencing, and is also a prerequisite for H3K4me and H3K79me formation. In association with the E3 enzyme RAD18, it catalyzes the monoubiquitination of POL30 'Lys-164', involved in postreplication repair of UV-damaged DNA. The RAD6/UBC2-RAD18 complex is also involved in prevention of spontaneous mutations caused by 7,8-dihydro-8-oxoguanine. In association with the E3 enzyme UBR1, is involved in N-end rule-dependent protein degradation. Also involved in sporulation. In Saccharomyces cerevisiae (strain ATCC 204508 / S288c) (Baker's yeast), this protein is Ubiquitin-conjugating enzyme E2 2 (RAD6).